The sequence spans 276 residues: Pantothenate synthetase (276 aa).

ATP is bound at residue 25-32 (MGYLHRGH). His32 acts as the Proton donor in catalysis. Residue Gln56 coordinates (R)-pantoate. Gln56 serves as a coordination point for beta-alanine. 143 to 146 (GEKD) contacts ATP. Gln149 provides a ligand contact to (R)-pantoate. ATP is bound by residues Val172 and 180–183 (LSSR).

The protein belongs to the pantothenate synthetase family. In terms of assembly, homodimer.

The protein resides in the cytoplasm. The catalysed reaction is (R)-pantoate + beta-alanine + ATP = (R)-pantothenate + AMP + diphosphate + H(+). The protein operates within cofactor biosynthesis; (R)-pantothenate biosynthesis; (R)-pantothenate from (R)-pantoate and beta-alanine: step 1/1. Catalyzes the condensation of pantoate with beta-alanine in an ATP-dependent reaction via a pantoyl-adenylate intermediate. This is Pantothenate synthetase from Thermus thermophilus (strain ATCC BAA-163 / DSM 7039 / HB27).